Consider the following 417-residue polypeptide: Serine hydroxymethyltransferase (417 aa).

(6S)-5,6,7,8-tetrahydrofolate-binding positions include Leu119 and 123-125 (GHL). Lys227 bears the N6-(pyridoxal phosphate)lysine mark.

Belongs to the SHMT family. In terms of assembly, homodimer. It depends on pyridoxal 5'-phosphate as a cofactor.

It localises to the cytoplasm. It carries out the reaction (6R)-5,10-methylene-5,6,7,8-tetrahydrofolate + glycine + H2O = (6S)-5,6,7,8-tetrahydrofolate + L-serine. The protein operates within one-carbon metabolism; tetrahydrofolate interconversion. It functions in the pathway amino-acid biosynthesis; glycine biosynthesis; glycine from L-serine: step 1/1. In terms of biological role, catalyzes the reversible interconversion of serine and glycine with tetrahydrofolate (THF) serving as the one-carbon carrier. This reaction serves as the major source of one-carbon groups required for the biosynthesis of purines, thymidylate, methionine, and other important biomolecules. Also exhibits THF-independent aldolase activity toward beta-hydroxyamino acids, producing glycine and aldehydes, via a retro-aldol mechanism. This Buchnera aphidicola subsp. Cinara cedri (strain Cc) protein is Serine hydroxymethyltransferase.